A 149-amino-acid polypeptide reads, in one-letter code: D-aminoacyl-tRNA deacylase (149 aa).

The Gly-cisPro motif, important for rejection of L-amino acids signature appears at 137–138 (GP).

It belongs to the DTD family. As to quaternary structure, homodimer.

Its subcellular location is the cytoplasm. The enzyme catalyses glycyl-tRNA(Ala) + H2O = tRNA(Ala) + glycine + H(+). It carries out the reaction a D-aminoacyl-tRNA + H2O = a tRNA + a D-alpha-amino acid + H(+). In terms of biological role, an aminoacyl-tRNA editing enzyme that deacylates mischarged D-aminoacyl-tRNAs. Also deacylates mischarged glycyl-tRNA(Ala), protecting cells against glycine mischarging by AlaRS. Acts via tRNA-based rather than protein-based catalysis; rejects L-amino acids rather than detecting D-amino acids in the active site. By recycling D-aminoacyl-tRNA to D-amino acids and free tRNA molecules, this enzyme counteracts the toxicity associated with the formation of D-aminoacyl-tRNA entities in vivo and helps enforce protein L-homochirality. This is D-aminoacyl-tRNA deacylase from Desulforudis audaxviator (strain MP104C).